The following is a 259-amino-acid chain: Ribonuclease PH (259 aa).

Phosphate-binding positions include Arg88 and 126-128 (GTR).

The protein belongs to the RNase PH family. Homohexameric ring arranged as a trimer of dimers.

It catalyses the reaction tRNA(n+1) + phosphate = tRNA(n) + a ribonucleoside 5'-diphosphate. Phosphorolytic 3'-5' exoribonuclease that plays an important role in tRNA 3'-end maturation. Removes nucleotide residues following the 3'-CCA terminus of tRNAs; can also add nucleotides to the ends of RNA molecules by using nucleoside diphosphates as substrates, but this may not be physiologically important. Probably plays a role in initiation of 16S rRNA degradation (leading to ribosome degradation) during starvation. The sequence is that of Ribonuclease PH from Mycobacterium ulcerans (strain Agy99).